A 206-amino-acid polypeptide reads, in one-letter code: MIEAIRIGIGGPVGSGKTRLVETLVPRLSAAGLSVAVITNDLVTDEDAQRVRRSGVIDPERVLAVETGACPHTAIREDPSANLAAAERLNRRFGDLDVILIESGGDNLAATFTSDLVDYWIFVIDTAAGDDIPRKKGIGLLQADLLVVNKIDLAALVGADLDMMRRDCAIARPVKPTVFTDLKSGHGLIELTERLIDGAMLGVGVP.

Residue 11 to 18 coordinates GTP; the sequence is GPVGSGKT.

The protein belongs to the SIMIBI class G3E GTPase family. UreG subfamily. As to quaternary structure, homodimer. UreD, UreF and UreG form a complex that acts as a GTP-hydrolysis-dependent molecular chaperone, activating the urease apoprotein by helping to assemble the nickel containing metallocenter of UreC. The UreE protein probably delivers the nickel.

Its subcellular location is the cytoplasm. Its function is as follows. Facilitates the functional incorporation of the urease nickel metallocenter. This process requires GTP hydrolysis, probably effectuated by UreG. The sequence is that of Urease accessory protein UreG from Mycolicibacterium gilvum (strain PYR-GCK) (Mycobacterium gilvum (strain PYR-GCK)).